We begin with the raw amino-acid sequence, 297 residues long: Farnesyl diphosphate synthase (297 aa).

Positions 47, 50, and 79 each coordinate isopentenyl diphosphate. The Mg(2+) site is built by Asp86 and Asp92. Residue Arg97 coordinates (2E)-geranyl diphosphate. Position 98 (Arg98) interacts with isopentenyl diphosphate. Residues Lys183, Thr184, Gln221, and Lys238 each contribute to the (2E)-geranyl diphosphate site.

Belongs to the FPP/GGPP synthase family. The cofactor is Mg(2+).

The protein localises to the cytoplasm. The catalysed reaction is isopentenyl diphosphate + (2E)-geranyl diphosphate = (2E,6E)-farnesyl diphosphate + diphosphate. The chain is Farnesyl diphosphate synthase from Geobacillus stearothermophilus (Bacillus stearothermophilus).